The following is a 387-amino-acid chain: Phosphoglycerate kinase (387 aa).

Substrate contacts are provided by residues 21–23 (DLN), Arg-36, 59–62 (HLGR), Arg-113, and Arg-146. Residues Lys-197, Glu-314, and 340-343 (GGDT) each bind ATP.

The protein belongs to the phosphoglycerate kinase family. In terms of assembly, monomer.

The protein resides in the cytoplasm. It carries out the reaction (2R)-3-phosphoglycerate + ATP = (2R)-3-phospho-glyceroyl phosphate + ADP. It participates in carbohydrate degradation; glycolysis; pyruvate from D-glyceraldehyde 3-phosphate: step 2/5. This Tolumonas auensis (strain DSM 9187 / NBRC 110442 / TA 4) protein is Phosphoglycerate kinase.